Reading from the N-terminus, the 716-residue chain is MIYQSPTIQVELLEDNIAKLCFNAPGSVNKFDRETLASLDAALDSIKQQSNIQALVLTSGKDTFIVGADITEFLGLFAQDDAVLLSWVEQANAVFNKLEDLPFPTASAIKGFALGGGCETILATDFRIADTTAKIGLPETKLGIIPGFGGTVRLPRVIGADNALEWITTGKDQRPEDALKVGAVDAVVAPEALEAAAIQMLKDAVAEKLDWQARRHRKMSPLTLPKLEAMMSFTTAKGMVFAVAGKHYPAPMAAVSVVEQAATKGRSDALQIEHQAFIKLAKTDVAKALIGIFLNDQLVKGKAKKAGKLAKDVKSAAVLGAGIMGGGIAYQSASKGTPIVMKDIAQPALDLGLGEAAKLLSAQVARGRSTPEKMAKVLNNITPALDYAPVNHADVVVEAVVEHPKVKAQVLAEVEQYVSEDAIIASNTSTISINLLAKSMKKPERFCGMHFFNPVHKMPLVEVIRGEHSSEETIASVVAYASKMGKTPIVVNDCPGFFVNRVLFPYFAGFNGLLAEGGDFAAIDKVMEKQFGWPMGPAYLLDVVGLDTGHHAQAVMAEGFPDRMGKSGNDAIDVMFENKRLGQKNGKGFYAYSVDSRGKPKKDVDPTSYELLKAAFGEQKAFDADEIIARTMIPMIIETVRCLEEGIVASPAEADMGLVYGLGFPPFRGGVFRYLDTMGVANFVALADKYAHLGGLYQVTDAMRALAANNGSYYQA.

Residues 1–189 (MIYQSPTIQV…KVGAVDAVVA (189 aa)) form an enoyl-CoA hydratase/isomerase region. Residue Asp296 coordinates substrate. Residues 311 to 716 (KDVKSAAVLG…AANNGSYYQA (406 aa)) are 3-hydroxyacyl-CoA dehydrogenase. Residues Met324, Asp343, 400 to 402 (VVE), Lys407, and Ser429 contribute to the NAD(+) site. Residue His450 is the For 3-hydroxyacyl-CoA dehydrogenase activity of the active site. Asn453 contacts NAD(+). Asn500 and Tyr660 together coordinate substrate.

This sequence in the N-terminal section; belongs to the enoyl-CoA hydratase/isomerase family. The protein in the C-terminal section; belongs to the 3-hydroxyacyl-CoA dehydrogenase family. In terms of assembly, heterotetramer of two alpha chains (FadB) and two beta chains (FadA).

The enzyme catalyses a (3S)-3-hydroxyacyl-CoA + NAD(+) = a 3-oxoacyl-CoA + NADH + H(+). The catalysed reaction is a (3S)-3-hydroxyacyl-CoA = a (2E)-enoyl-CoA + H2O. It carries out the reaction a 4-saturated-(3S)-3-hydroxyacyl-CoA = a (3E)-enoyl-CoA + H2O. It catalyses the reaction (3S)-3-hydroxybutanoyl-CoA = (3R)-3-hydroxybutanoyl-CoA. The enzyme catalyses a (3Z)-enoyl-CoA = a 4-saturated (2E)-enoyl-CoA. The catalysed reaction is a (3E)-enoyl-CoA = a 4-saturated (2E)-enoyl-CoA. Its pathway is lipid metabolism; fatty acid beta-oxidation. In terms of biological role, involved in the aerobic and anaerobic degradation of long-chain fatty acids via beta-oxidation cycle. Catalyzes the formation of 3-oxoacyl-CoA from enoyl-CoA via L-3-hydroxyacyl-CoA. It can also use D-3-hydroxyacyl-CoA and cis-3-enoyl-CoA as substrate. This chain is Fatty acid oxidation complex subunit alpha, found in Shewanella sp. (strain MR-7).